Here is a 318-residue protein sequence, read N- to C-terminus: Methionine import ATP-binding protein MetN (318 aa).

The ABC transporter domain maps to 2-237 (IEIKDVGKIF…PEGELKKIIE (236 aa)). Residue 34–41 (GRSGAGKS) participates in ATP binding.

The protein belongs to the ABC transporter superfamily. Methionine importer (TC 3.A.1.24) family. The complex is composed of two ATP-binding proteins (MetN), two transmembrane proteins (MetI) and a solute-binding protein (MetQ).

It localises to the cell membrane. The catalysed reaction is L-methionine(out) + ATP + H2O = L-methionine(in) + ADP + phosphate + H(+). It catalyses the reaction D-methionine(out) + ATP + H2O = D-methionine(in) + ADP + phosphate + H(+). In terms of biological role, part of the ABC transporter complex MetNIQ involved in methionine import. Responsible for energy coupling to the transport system. The chain is Methionine import ATP-binding protein MetN from Clostridium tetani (strain Massachusetts / E88).